We begin with the raw amino-acid sequence, 84 residues long: Magnetosome protein MamR (84 aa).

This sequence belongs to the magnetosome MamR family.

The protein resides in the magnetosome. In terms of biological role, may play a role in controlling magnetite number and size. Coexpression of mamLQRBIEMO in a deletion of the 17 gene mamAB operon restores magnetosome vesicle formation but not magnetite biosynthesis. The chain is Magnetosome protein MamR from Magnetospirillum gryphiswaldense (strain DSM 6361 / JCM 21280 / NBRC 15271 / MSR-1).